A 469-amino-acid chain; its full sequence is Abscisic acid 8'-hydroxylase CYP707A2 (469 aa).

A helical transmembrane segment spans residues 3–23 (FVSMLCLFTFISLTLLLIHSI). Cys414 serves as a coordination point for heme.

Belongs to the cytochrome P450 family. Heme serves as cofactor. Expressed at low levels in fruit.

The protein localises to the membrane. It carries out the reaction 2-cis-(+)-abscisate + reduced [NADPH--hemoprotein reductase] + O2 = (+)-8'-hydroxyabscisate + oxidized [NADPH--hemoprotein reductase] + H2O + H(+). The protein operates within plant hormone degradation; abscisic acid degradation. Its function is as follows. Negative regulator of fruit ripening involved in the oxidative degradation of abscisic acid (ABA). The chain is Abscisic acid 8'-hydroxylase CYP707A2 from Solanum lycopersicum (Tomato).